We begin with the raw amino-acid sequence, 248 residues long: Triosephosphate isomerase (248 aa).

Residue 9–11 (NWK) participates in substrate binding. H94 functions as the Electrophile in the catalytic mechanism. The active-site Proton acceptor is E166. Residues G172, S212, and 233 to 234 (GG) contribute to the substrate site.

This sequence belongs to the triosephosphate isomerase family. Homodimer.

The protein resides in the cytoplasm. It catalyses the reaction D-glyceraldehyde 3-phosphate = dihydroxyacetone phosphate. Its pathway is carbohydrate biosynthesis; gluconeogenesis. It functions in the pathway carbohydrate degradation; glycolysis; D-glyceraldehyde 3-phosphate from glycerone phosphate: step 1/1. Functionally, involved in the gluconeogenesis. Catalyzes stereospecifically the conversion of dihydroxyacetone phosphate (DHAP) to D-glyceraldehyde-3-phosphate (G3P). The polypeptide is Triosephosphate isomerase (Clostridium botulinum (strain Langeland / NCTC 10281 / Type F)).